A 614-amino-acid chain; its full sequence is Vitamin B12 transporter BtuB (614 aa).

Positions 1-20 (MIKKASLLTACSVTAFSAWA) are cleaved as a signal peptide. The TonB box signature appears at 26 to 33 (DTLVVTAN). In terms of domain architecture, TBDR plug spans 38-152 (PRSTVLAPTT…IGGVVNIITT (115 aa)). Cyanocob(III)alamin is bound by residues Leu-83, Ser-85, Asn-92, and 110-111 (VS). One can recognise a TBDR beta-barrel domain in the interval 155-614 (HPGTEISAGW…EYTLSGSYTF (460 aa)). The next 3 membrane-spanning stretches (beta stranded) occupy residues 158–165 (TEISAGWG), 169–178 (YQNYDVSTQQ), and 184–195 (TRVTLLGDYAHT). The Ca(2+) site is built by Asp-199, Gln-211, Asp-213, and Asp-215. Transmembrane regions (beta stranded) follow at residues 217 to 227 (FLSKTLYGALE) and 232 to 248 (DVWSGFVRGYGYDNRTN). Residues Tyr-249 and Asp-250 each coordinate Ca(2+). Position 251 (Ala-251) interacts with cyanocob(III)alamin. Asp-261 serves as a coordination point for Ca(2+). A run of 14 beta stranded transmembrane segments spans residues 263–277 (RKLYSQSWDAGLRYN), 279–296 (ELIKSQLITSYSHSKDYN), 309–325 (TLDEMKQYTVQWANNII), 328–337 (HGNIGAGVDW), 353–369 (YDQRNTGIYLTGLQQVG), 371–381 (FTFEGAGRSDD), 385–400 (FGRHGTWQTSAGWEFI), 403–417 (YRFIASYGTSYKAPN), 434–443 (KSKQWEGAFE), 449–458 (VNWRISGYRN), 473–490 (YYNEGKARIKGVEATANF), 494–509 (PLTHTVSYDYVDARNA), 517–529 (RRAKQQVKYQLDW), and 535–550 (DWGITYQYLGTRYDKD). Thr-309 lines the cyanocob(III)alamin pocket. Arg-517 is a cyanocob(III)alamin binding site. Tyr-551 is a binding site for cyanocob(III)alamin. The next 3 membrane-spanning stretches (beta stranded) occupy residues 558-572 (TVKMGGVSLWDLAVA), 585-596 (IANLFDKDYETV), and 602-614 (AGREYTLSGSYTF). The TonB C-terminal box motif lies at 597–614 (YGYQTAGREYTLSGSYTF).

The protein belongs to the TonB-dependent receptor family. BtuB (TC 1.B.14.3.1) subfamily.

The protein resides in the cell outer membrane. In terms of biological role, involved in the active translocation of vitamin B12 (cyanocobalamin) across the outer membrane to the periplasmic space. It derives its energy for transport by interacting with the trans-periplasmic membrane protein TonB. This Escherichia coli O6:K15:H31 (strain 536 / UPEC) protein is Vitamin B12 transporter BtuB.